The primary structure comprises 354 residues: Lariat debranching enzyme (354 aa).

The a divalent metal cation site is built by C14, H16, and D45. Residues K59, N90, H91, K134, and H156 each contribute to the RNA site. Position 90 (N90) interacts with a divalent metal cation. The tract at residues 130–158 is lariat recognition loop; it reads SGIYKSFDEKKPYTYPPSPNDVVSLFHTR. Residue H180 coordinates a divalent metal cation. 5 residues coordinate RNA: G201, D205, H230, M231, and H232. Residue H230 coordinates a divalent metal cation. A divalent metal cation is bound at residue H232.

Belongs to the lariat debranching enzyme family. It depends on Fe(2+) as a cofactor. Zn(2+) is required as a cofactor. The cofactor is Mn(2+).

The protein resides in the cytoplasm. It localises to the perinuclear region. With respect to regulation, active in presence of diverse metals including Fe(2+), Zn(2+) and Mn(2+). Binds two metal cations in two adjacent alpha and beta metal-binding pockets. The activity is the highest with Fe(2+) bound to the 2 metal-binding sites. The activity is slightly lower with Fe(2+) bound to the beta site and Zn(2+) to the alpha site and decreases further when only Zn(2+) is bound. No activity with Mn(2+). However, another study showed activity with Mn(2+) bound to the beta site and Zn(2+) to the alpha site. Mn(2+) appears unable to bind to the alpha site. Its function is as follows. Cleaves the 2'-5' phosphodiester linkage at the branch point of excised lariat intron RNA and converts them into linear molecules that can be subsequently degraded, thereby facilitating ribonucleotide turnover. The protein is Lariat debranching enzyme of Entamoeba histolytica (strain ATCC 30459 / HM-1:IMSS / ABRM).